The sequence spans 200 residues: Transcription factor FapR (200 aa).

This sequence belongs to the FapR family.

In terms of biological role, transcriptional factor involved in regulation of membrane lipid biosynthesis by repressing genes involved in fatty acid and phospholipid metabolism. This is Transcription factor FapR from Thermoanaerobacter pseudethanolicus (strain ATCC 33223 / 39E) (Clostridium thermohydrosulfuricum).